The chain runs to 482 residues: MFIRNNRRSKIVATVGPASSSPDMLRSLFLAGVDTFRLNFSHGARADHAEVYRNIRALEQEHDAAIAVLQDLQGPKIRIGVLAHGRLDLARGSTIGFILGREGGEGMNDIPLPHREIFEVAVPGMDLLIDDGRIKVRIMEVMDGRLVCEVLNGGALSNRKGVNVPGAVLDISPLTAKDREDLEFGLELGVDWVALSFVQRARDMIEARSLVGDRAGLIAKIEKPSALDDIEDIVRLSDSVMVARGDLGVEIPPEDVPGKQKEIIRACRLAAKPVIVATQMLDSMVSSPTPTRAEASDVAGAIYDGADAVMLSAETATGAYPVEAVEIMNRIIEKTEKHKHYRPILEATEPDVAQSPPHAVATAAANVAVALGSPVVVAYTSSGTTAARISRARPALPILALTPSEQVARRLNMFWGVVGVRSQDVHTYEASLIHAQQAVQEAKLASPSDHIVIVAGFPFAQQGSTNNLRVVQIAATDNLEIA.

Arg37 is a binding site for substrate. 3 residues coordinate K(+): Asn39, Ser41, and Asp71. 39 to 42 (NFSH) is an ATP binding site. Residues Arg78 and Lys160 each coordinate ATP. Glu222 is a binding site for Mg(2+). Residues Gly245, Asp246, and Thr278 each coordinate substrate. A Mg(2+)-binding site is contributed by Asp246.

The protein belongs to the pyruvate kinase family. Homotetramer. The cofactor is Mg(2+). K(+) is required as a cofactor.

It carries out the reaction pyruvate + ATP = phosphoenolpyruvate + ADP + H(+). The protein operates within carbohydrate degradation; glycolysis; pyruvate from D-glyceraldehyde 3-phosphate: step 5/5. The protein is Pyruvate kinase (ttuE) of Agrobacterium vitis (Rhizobium vitis).